A 365-amino-acid polypeptide reads, in one-letter code: Histidinol-phosphate aminotransferase 2 (365 aa).

K221 bears the N6-(pyridoxal phosphate)lysine mark.

Belongs to the class-II pyridoxal-phosphate-dependent aminotransferase family. Histidinol-phosphate aminotransferase subfamily. Homodimer. Requires pyridoxal 5'-phosphate as cofactor.

The catalysed reaction is L-histidinol phosphate + 2-oxoglutarate = 3-(imidazol-4-yl)-2-oxopropyl phosphate + L-glutamate. Its pathway is amino-acid biosynthesis; L-histidine biosynthesis; L-histidine from 5-phospho-alpha-D-ribose 1-diphosphate: step 7/9. The chain is Histidinol-phosphate aminotransferase 2 (hisC2) from Bradyrhizobium diazoefficiens (strain JCM 10833 / BCRC 13528 / IAM 13628 / NBRC 14792 / USDA 110).